A 245-amino-acid polypeptide reads, in one-letter code: Probable phosphatase Teth514_1060 (245 aa).

Residues His-8, His-10, His-16, His-41, Glu-74, His-102, His-133, Asp-194, and His-196 each coordinate Zn(2+).

It belongs to the PHP family. Requires Zn(2+) as cofactor.

The chain is Probable phosphatase Teth514_1060 from Thermoanaerobacter sp. (strain X514).